Consider the following 255-residue polypeptide: Acetylglutamate kinase (255 aa).

Residues 40-41 (GG), Arg62, and Asn153 each bind substrate.

This sequence belongs to the acetylglutamate kinase family. ArgB subfamily.

It is found in the cytoplasm. It catalyses the reaction N-acetyl-L-glutamate + ATP = N-acetyl-L-glutamyl 5-phosphate + ADP. It functions in the pathway amino-acid biosynthesis; L-arginine biosynthesis; N(2)-acetyl-L-ornithine from L-glutamate: step 2/4. Functionally, catalyzes the ATP-dependent phosphorylation of N-acetyl-L-glutamate. The protein is Acetylglutamate kinase of Bacillus cereus (strain ATCC 10987 / NRS 248).